Reading from the N-terminus, the 121-residue chain is uncharacterized protein (121 aa).

2 disordered regions span residues 38-76 (NQMAQKRNKQSKKPKQTSKGVKKSSKQNKNSSKNNKYQQ) and 91-121 (SVLRSAHNSGSKMSDISNSIQLLSMTKKQEN). Basic residues predominate over residues 43–63 (KRNKQSKKPKQTSKGVKKSSK). The segment covering 64–76 (QNKNSSKNNKYQQ) has biased composition (low complexity).

This is an uncharacterized protein from Schizosaccharomyces pombe (strain 972 / ATCC 24843) (Fission yeast).